Consider the following 788-residue polypeptide: Autophagy-related protein 9 (788 aa).

The Cytoplasmic segment spans residues 1–171; the sequence is MTDKSTFLSV…EAYMYYTGKG (171 aa). The segment covering 32 to 42 has biased composition (basic and acidic residues); the sequence is ILRRVEEEHAQ. The disordered stretch occupies residues 32–127; that stretch reads ILRRVEEEHA…TGVANGGLPR (96 aa). Over residues 44–58 the composition is skewed to low complexity; it reads SDNSNSDNDSGNDSD. Over residues 101–112 the composition is skewed to polar residues; sequence SFAQGTKTQTPI. The chain crosses the membrane as a helical span at residues 172 to 192; that stretch reads LVSIILSRVLNMSTIMFVVVF. Residues 193 to 222 lie on the Lumenal side of the membrane; that stretch reads STYLGSCIDYSKIKGSRTLDEVHVKQCYAK. The chain crosses the membrane as a helical span at residues 223 to 243; sequence LGSFHVFVLWTFFVLWFMKLF. Over 244–390 the chain is Cytoplasmic; the sequence is QYVKDIRRLV…QILSTGLRRR (147 aa). Phenylalanine 391 is an intramembrane region. At 392-479 the chain is on the cytoplasmic side; the sequence is VFAAIMNVVF…PKEKTALVSK (88 aa). The helical transmembrane segment at 480–500 threads the bilayer; that stretch reads FVSFIAGSFAAVLGIASLIDP. Residues 501–512 lie on the Lumenal side of the membrane; it reads ELFLMFEISANR. A helical transmembrane segment spans residues 513–533; sequence TVLFYIGVFGSILAVSRSLIP. The Cytoplasmic portion of the chain corresponds to 534–579; it reads EETLVFDPEISLRYVAEFTHYLPPEWEGKLHTEQVKNEFSLMYEMR. An intramembrane segment occupies 580–600; it reads LIILLKELASIFLAPFILYYS. Topologically, residues 601–788 are cytoplasmic; the sequence is LTQSCDDIVD…KKTDNMNLGA (188 aa). The tract at residues 715–736 is disordered; the sequence is LSPAAPTATTATSGTATGAAPR. Positions 716 to 734 are enriched in low complexity; that stretch reads SPAAPTATTATSGTATGAA.

It belongs to the ATG9 family. In terms of assembly, homotrimer; forms a homotrimer with a central pore that forms a path between the two membrane leaflets. Phosphorylated by ATG1. ATG1 phosphorylation is required for preautophagosome elongation.

The protein localises to the preautophagosomal structure membrane. It is found in the cytoplasmic vesicle membrane. The protein resides in the golgi apparatus membrane. It localises to the endoplasmic reticulum membrane. The catalysed reaction is a 1,2-diacyl-sn-glycero-3-phosphocholine(in) = a 1,2-diacyl-sn-glycero-3-phosphocholine(out). It carries out the reaction a 1,2-diacyl-sn-glycero-3-phospho-L-serine(in) = a 1,2-diacyl-sn-glycero-3-phospho-L-serine(out). The enzyme catalyses a 1,2-diacyl-sn-glycero-3-phosphoethanolamine(in) = a 1,2-diacyl-sn-glycero-3-phosphoethanolamine(out). It catalyses the reaction a 1,2-diacyl-sn-glycero-3-phospho-(1D-myo-inositol-3-phosphate)(in) = a 1,2-diacyl-sn-glycero-3-phospho-(1D-myo-inositol-3-phosphate)(out). Its function is as follows. Phospholipid scramblase involved in autophagy and cytoplasm to vacuole transport (Cvt) vesicle formation. Cycles between the preautophagosomal structure/phagophore assembly site (PAS) and the cytoplasmic vesicle pool and supplies membrane for the growing autophagosome. Lipid scramblase activity plays a key role in preautophagosomal structure/phagophore assembly by distributing the phospholipids that arrive through ATG2 from the cytoplasmic to the luminal leaflet of the bilayer, thereby driving autophagosomal membrane expansion. Required for mitophagy. Also involved in endoplasmic reticulum-specific autophagic process and is essential for the survival of cells subjected to severe ER stress. Different machineries are required for anterograde trafficking to the PAS during either the Cvt pathway or bulk autophagy and for retrograde trafficking. This is Autophagy-related protein 9 from Yarrowia lipolytica (strain CLIB 122 / E 150) (Yeast).